Reading from the N-terminus, the 480-residue chain is Aromatic-L-amino-acid decarboxylase (480 aa).

Met1 is modified (N-acetylmethionine). Repeat copies occupy residues 58-115 and 118-178. The interval 58-178 is 2 X approximate tandem repeats; sequence GDIERIIMPG…AASPELTQAA (121 aa). Residue Thr82 coordinates substrate. Pyridoxal 5'-phosphate-binding residues include Ala148 and Ser149. His192 contacts substrate. Residues Thr246 and Asn300 each contribute to the pyridoxal 5'-phosphate site. At Lys303 the chain carries N6-(pyridoxal phosphate)lysine.

It belongs to the group II decarboxylase family. In terms of assembly, homodimer. The cofactor is pyridoxal 5'-phosphate.

It catalyses the reaction L-dopa + H(+) = dopamine + CO2. The enzyme catalyses 5-hydroxy-L-tryptophan + H(+) = serotonin + CO2. The protein operates within catecholamine biosynthesis; dopamine biosynthesis; dopamine from L-tyrosine: step 2/2. In terms of biological role, catalyzes the decarboxylation of L-3,4-dihydroxyphenylalanine (DOPA) to dopamine and L-5-hydroxytryptophan to serotonin. This Cavia porcellus (Guinea pig) protein is Aromatic-L-amino-acid decarboxylase (DDC).